A 154-amino-acid chain; its full sequence is Homeobox protein engrailed (154 aa).

The homeobox DNA-binding region spans 37–96 (EKRPRTAFSASQLQRLKQEFQQSNYLTEQRRRSLAKELTLSESQIKIWFQNKRAKIKKAS). The tract at residues 127 to 154 (KLLNGQNTSGDCSRSDYTSDSDGDSLTH) is disordered. A compositionally biased stretch (polar residues) spans 129–144 (LNGQNTSGDCSRSDYT). Acidic residues predominate over residues 145–154 (SDSDGDSLTH).

The protein belongs to the engrailed homeobox family.

The protein localises to the nucleus. The polypeptide is Homeobox protein engrailed (EN) (Tripneustes gratilla (Hawaian sea urchin)).